Consider the following 376-residue polypeptide: Succinyl-diaminopimelate desuccinylase (376 aa).

A Zn(2+)-binding site is contributed by His-67. Residue Asp-69 is part of the active site. Residue Asp-100 coordinates Zn(2+). Glu-134 functions as the Proton acceptor in the catalytic mechanism. Positions 135, 163, and 349 each coordinate Zn(2+).

It belongs to the peptidase M20A family. DapE subfamily. As to quaternary structure, homodimer. Requires Zn(2+) as cofactor. The cofactor is Co(2+).

It catalyses the reaction N-succinyl-(2S,6S)-2,6-diaminopimelate + H2O = (2S,6S)-2,6-diaminopimelate + succinate. It participates in amino-acid biosynthesis; L-lysine biosynthesis via DAP pathway; LL-2,6-diaminopimelate from (S)-tetrahydrodipicolinate (succinylase route): step 3/3. Catalyzes the hydrolysis of N-succinyl-L,L-diaminopimelic acid (SDAP), forming succinate and LL-2,6-diaminopimelate (DAP), an intermediate involved in the bacterial biosynthesis of lysine and meso-diaminopimelic acid, an essential component of bacterial cell walls. This Shewanella denitrificans (strain OS217 / ATCC BAA-1090 / DSM 15013) protein is Succinyl-diaminopimelate desuccinylase.